The chain runs to 314 residues: Inosine-uridine preferring nucleoside hydrolase (314 aa).

Asp10 provides a ligand contact to Ca(2+). Asp14 serves as a coordination point for substrate. Residues Asp15 and Thr126 each contribute to the Ca(2+) site. Residues Asn160, Glu166, and Asn168 each contribute to the substrate site. The Proton donor role is filled by His240. Asp241 lines the Ca(2+) pocket.

The protein belongs to the IUNH family. As to quaternary structure, homotetramer. Ca(2+) serves as cofactor.

It catalyses the reaction inosine + H2O = hypoxanthine + D-ribose. The catalysed reaction is uridine + H2O = D-ribose + uracil. The protein operates within purine metabolism; purine nucleoside salvage. With respect to regulation, is potently inhibited by immucillin A and immucillin ACAP, which are transition state inhibitors. In terms of biological role, catalyzes the hydrolysis of the N-glycosidic bond of all of the commonly occurring purine and pyrimidine nucleosides into ribose and the associated base, but has a preference for inosine and uridine as substrates. Likely functions in purine salvage from the host, a fundamental pathway since protozoan parasites such as L.major are incapable of de novo purine biosynthesis. The polypeptide is Inosine-uridine preferring nucleoside hydrolase (NSNH) (Leishmania major).